Reading from the N-terminus, the 434-residue chain is Trigger factor (434 aa).

In terms of domain architecture, PPIase FKBP-type spans 161–246 (EDRVTVDFNG…LKKVEERELP (86 aa)).

The protein belongs to the FKBP-type PPIase family. Tig subfamily.

It localises to the cytoplasm. It carries out the reaction [protein]-peptidylproline (omega=180) = [protein]-peptidylproline (omega=0). Functionally, involved in protein export. Acts as a chaperone by maintaining the newly synthesized protein in an open conformation. Functions as a peptidyl-prolyl cis-trans isomerase. The polypeptide is Trigger factor (Proteus mirabilis (strain HI4320)).